The chain runs to 508 residues: Maturase K (508 aa).

Belongs to the intron maturase 2 family. MatK subfamily.

The protein localises to the plastid. Its subcellular location is the chloroplast. Usually encoded in the trnK tRNA gene intron. Probably assists in splicing its own and other chloroplast group II introns. In Huidobria chilensis (Loasa chilensis), this protein is Maturase K.